The chain runs to 440 residues: Argininosuccinate lyase (440 aa).

This sequence belongs to the lyase 1 family. Argininosuccinate lyase subfamily.

The protein resides in the cytoplasm. It catalyses the reaction 2-(N(omega)-L-arginino)succinate = fumarate + L-arginine. The protein operates within amino-acid biosynthesis; L-arginine biosynthesis; L-arginine from L-ornithine and carbamoyl phosphate: step 3/3. The chain is Argininosuccinate lyase from Clostridium botulinum (strain 657 / Type Ba4).